Here is a 437-residue protein sequence, read N- to C-terminus: Enolase (437 aa).

Gln162 contacts (2R)-2-phosphoglycerate. The active-site Proton donor is the Glu204. Asp251, Glu297, and Asp324 together coordinate Mg(2+). Residues Lys349, Arg378, Ser379, and Lys400 each contribute to the (2R)-2-phosphoglycerate site. Lys349 (proton acceptor) is an active-site residue.

It belongs to the enolase family. Mg(2+) is required as a cofactor.

The protein resides in the cytoplasm. The protein localises to the secreted. It is found in the cell surface. It carries out the reaction (2R)-2-phosphoglycerate = phosphoenolpyruvate + H2O. The protein operates within carbohydrate degradation; glycolysis; pyruvate from D-glyceraldehyde 3-phosphate: step 4/5. Catalyzes the reversible conversion of 2-phosphoglycerate (2-PG) into phosphoenolpyruvate (PEP). It is essential for the degradation of carbohydrates via glycolysis. The sequence is that of Enolase from Chlorobium chlorochromatii (strain CaD3).